The following is a 211-amino-acid chain: Protein crossbronx-like (211 aa).

In terms of domain architecture, UBC core spans Asn-17–Lys-177.

This sequence belongs to the ubiquitin-conjugating enzyme family. FTS subfamily.

This Drosophila grimshawi (Hawaiian fruit fly) protein is Protein crossbronx-like.